Reading from the N-terminus, the 345-residue chain is Nicotinate-nucleotide--dimethylbenzimidazole phosphoribosyltransferase (345 aa).

Glu312 functions as the Proton acceptor in the catalytic mechanism.

Belongs to the CobT family.

The enzyme catalyses 5,6-dimethylbenzimidazole + nicotinate beta-D-ribonucleotide = alpha-ribazole 5'-phosphate + nicotinate + H(+). The protein operates within nucleoside biosynthesis; alpha-ribazole biosynthesis; alpha-ribazole from 5,6-dimethylbenzimidazole: step 1/2. Catalyzes the synthesis of alpha-ribazole-5'-phosphate from nicotinate mononucleotide (NAMN) and 5,6-dimethylbenzimidazole (DMB). The polypeptide is Nicotinate-nucleotide--dimethylbenzimidazole phosphoribosyltransferase (Phocaeicola vulgatus (strain ATCC 8482 / DSM 1447 / JCM 5826 / CCUG 4940 / NBRC 14291 / NCTC 11154) (Bacteroides vulgatus)).